The primary structure comprises 158 residues: Transcriptional repressor NrdR (158 aa).

A zinc finger lies at 3–34 (CPSCQNTDSRVLESRAAEGGRSVRRRRECLNC). An ATP-cone domain is found at 49–139 (ITVIKRNGHR…VYRHFRSVSD (91 aa)).

Belongs to the NrdR family. Zn(2+) serves as cofactor.

In terms of biological role, negatively regulates transcription of bacterial ribonucleotide reductase nrd genes and operons by binding to NrdR-boxes. In Synechococcus sp. (strain CC9311), this protein is Transcriptional repressor NrdR.